The sequence spans 102 residues: MFAIIETGGKQLKVEQGQEIWVEKLNAEEGSTFTFDQVLMVGGETVKVGSPVVEGATVTAKVEKHGRGKKITVFKYKPKKNYKRKQGHRQPYTKLVIEAINA.

It belongs to the bacterial ribosomal protein bL21 family. Part of the 50S ribosomal subunit. Contacts protein L20.

Its function is as follows. This protein binds to 23S rRNA in the presence of protein L20. The polypeptide is Large ribosomal subunit protein bL21 (Macrococcus caseolyticus (strain JCSC5402) (Macrococcoides caseolyticum)).